The sequence spans 506 residues: MTAYLIVFCLCCWSAARSANILAYFPTPSYSHQLVFRAYVELLAERGHAVTVIRPLTRVDFNRNAGNLTTIDLDGDGLLLLMKASTTHRKRGIVADTDTVTADNYEALVRMVDRQIHSEPFQRHLKSARRGYDLLVVEAFVDYALIASHLFGDVPVVQISSGHATAENFETMGATSRHPRYYPNLWRFNFGPLSVWDGVRELYTELRLQREFGLLADRQDALLKRRFGPEAPGLRELRSRVRLLFVNVHSVFDNNRPVPPSVQYLGGLHLHDRRAEPLSEAVARFLDESRRGVVYVSFGSGLATEDMDADMAAALLDAFKMMPYDVLWKHDGRVDGLTIPANVFVQKWFAQFEVLQHKNVKAFVTQAGVQSTDEAVENLVPLVGVPLMGDQAFNAHRYVELGIGVALDATRLTAADLARAVEQVTSDRAYRENLERLRRLLRHQCASPTHKAVWYTEHALRRDGDALKTKAANVDYAEYCMSDLLAPLLSVSLMSHLHSLIRMFVW.

Residues 1 to 18 (MTAYLIVFCLCCWSAARS) form the signal peptide.

The protein belongs to the UDP-glycosyltransferase family.

Its function is as follows. Catalyzes the transfer of glucose from UDP-glucose to ecdysteroids which are insect molting hormones. Expression of egt interferes with normal insect development and block molting. The protein is Ecdysteroid UDP-glucosyltransferase (EGT) of Lymantria dispar multicapsid nuclear polyhedrosis virus (LdMNPV).